We begin with the raw amino-acid sequence, 467 residues long: MTARTPIRTRFAPSPTGYLHVGGARTALFSWAYARHFGGTFVLRIEDTDLERSTPEAVQAIIEGMEWLGLHHDEGPFYQMQRMDRYREVIAQMLAAGTAYYCYSSSEEVEAMRERQRAAGEKPRYDGTWRPEAGKTLPAIPADRKPVVRFRNPMEGDVTWLDVVKGQITISNRELDDLVIARQDGTPTYNFCVAVDDSDMKITHVIRGDDHVNNTPRQINILKALGAELPHYGHLPMILGADGAKLSKRHGAVSVMDYPAQGYLPEAMLNYLARLGWSHGDDEVFSMEQFTEWFDLDHLTKSPAQFDPEKLDWINNHYIKQADNTRLAGLIKPMMENLGAQFDNAPDLPAVIGLMKERVKTLNELAVTAMLFYRQPAPDAALLTQHLTDAVKPALAQYVEQLKTVAWGKDALSAALKEVLATHKLKMPQLAMPLRLIITGQLQTPSIDAVVELFGREVVLARIANYL.

Residues P13 to G23 carry the 'HIGH' region motif. A 'KMSKS' region motif is present at residues K245–R249. Residue K248 participates in ATP binding.

Belongs to the class-I aminoacyl-tRNA synthetase family. Glutamate--tRNA ligase type 1 subfamily. As to quaternary structure, monomer.

The protein resides in the cytoplasm. The enzyme catalyses tRNA(Glu) + L-glutamate + ATP = L-glutamyl-tRNA(Glu) + AMP + diphosphate. Catalyzes the attachment of glutamate to tRNA(Glu) in a two-step reaction: glutamate is first activated by ATP to form Glu-AMP and then transferred to the acceptor end of tRNA(Glu). The chain is Glutamate--tRNA ligase from Herminiimonas arsenicoxydans.